A 267-amino-acid polypeptide reads, in one-letter code: Small ribosomal subunit protein uS2c (267 aa).

Residues 237 to 267 form a disordered region; sequence KQKIKKTGVKISGNRRTSSITKKRNPASSKI. Residues 250–267 are compositionally biased toward polar residues; the sequence is NRRTSSITKKRNPASSKI.

It belongs to the universal ribosomal protein uS2 family.

The protein localises to the plastid. It is found in the chloroplast. The polypeptide is Small ribosomal subunit protein uS2c (rps2) (Chlorella vulgaris (Green alga)).